A 295-amino-acid polypeptide reads, in one-letter code: Small ribosomal subunit protein uS3 (295 aa).

Positions 39–107 (VREYLKKKLK…PVAVNIEEVR (69 aa)) constitute a KH type-2 domain. The tract at residues 213–295 (GTGAKMIEVA…AAAADGAKTE (83 aa)) is disordered. Over residues 224 to 245 (EERKPRGPRRDARPGDRPDRGA) the composition is skewed to basic and acidic residues. Low complexity-rich tracts occupy residues 246–255 (PRGAPRAPRG) and 283–295 (AAPAAAADGAKTE).

The protein belongs to the universal ribosomal protein uS3 family. Part of the 30S ribosomal subunit. Forms a tight complex with proteins S10 and S14.

In terms of biological role, binds the lower part of the 30S subunit head. Binds mRNA in the 70S ribosome, positioning it for translation. In Polaromonas naphthalenivorans (strain CJ2), this protein is Small ribosomal subunit protein uS3.